Here is a 547-residue protein sequence, read N- to C-terminus: Glucose-6-phosphate isomerase (547 aa).

The Proton donor role is filled by glutamate 351. Active-site residues include histidine 382 and lysine 511.

The protein belongs to the GPI family.

It localises to the cytoplasm. It carries out the reaction alpha-D-glucose 6-phosphate = beta-D-fructose 6-phosphate. It participates in carbohydrate biosynthesis; gluconeogenesis. The protein operates within carbohydrate degradation; glycolysis; D-glyceraldehyde 3-phosphate and glycerone phosphate from D-glucose: step 2/4. Functionally, catalyzes the reversible isomerization of glucose-6-phosphate to fructose-6-phosphate. The protein is Glucose-6-phosphate isomerase of Xanthobacter autotrophicus (strain ATCC BAA-1158 / Py2).